The primary structure comprises 295 residues: Small ribosomal subunit protein uS2 (295 aa).

Position 2 is an N-acetylserine (Ser-2). Residue Ser-43 is modified to Phosphoserine. At Lys-52 the chain carries N6-acetyllysine. The segment at 54–113 is interaction with PPP1R16B; that stretch reads TWEKLLLAARAIVAIENPADVSVISSRNTGQRAVLKFAAATGATPIAGRFTPGTFTNQIQ. N6-acetyllysine; alternate is present on Lys-89. Lys-89 is covalently cross-linked (Glycyl lysine isopeptide (Lys-Gly) (interchain with G-Cter in SUMO2); alternate). Thr-97 carries the post-translational modification Phosphothreonine. Laminin-binding regions lie at residues 161–180 and 205–229; these read IPCNNKGAHSVGLMWWMLAR and RDPEEIEKEEQAAAEKAVTKEEFQG. 5 [DE]-W-[ST] repeats span residues 230-232, 247-249, 266-268, 275-277, and 293-295; these read EWT, DWS, and EWS. The tract at residues 242–295 is laminin-binding; that stretch reads QPEVADWSEGVQVPSVPIQQFPTEDWSAQPSTEDWSAAPTAQATEWVGTTTEWS. The disordered stretch occupies residues 266–295; the sequence is DWSAQPSTEDWSAAPTAQATEWVGTTTEWS.

The protein belongs to the universal ribosomal protein uS2 family. As to quaternary structure, monomer (37LRP) and homodimer (67LR). Component of the small ribosomal subunit. Mature ribosomes consist of a small (40S) and a large (60S) subunit. The 40S subunit contains about 33 different proteins and 1 molecule of RNA (18S). The 60S subunit contains about 49 different proteins and 3 molecules of RNA (28S, 5.8S and 5S). Interacts with RPS21. Interacts with several laminins including at least LAMB1. Interacts with MDK. The mature dimeric form interacts with PPP1R16B (via its fourth ankyrin repeat). Interacts with PPP1CA only in the presence of PPP1R16B. Post-translationally, acylated. Acylation may be a prerequisite for conversion of the monomeric 37 kDa laminin receptor precursor (37LRP) to the mature dimeric 67 kDa laminin receptor (67LR), and may provide a mechanism for membrane association. In terms of processing, cleaved by stromelysin-3 (ST3) at the cell surface. Cleavage by stromelysin-3 may be a mechanism to alter cell-extracellular matrix interactions.

It is found in the cell membrane. The protein resides in the cytoplasm. Its subcellular location is the nucleus. Its function is as follows. Required for the assembly and/or stability of the 40S ribosomal subunit. Required for the processing of the 20S rRNA-precursor to mature 18S rRNA in a late step of the maturation of 40S ribosomal subunits. Also functions as a cell surface receptor for laminin. Plays a role in cell adhesion to the basement membrane and in the consequent activation of signaling transduction pathways. May play a role in cell fate determination and tissue morphogenesis. Also acts as a receptor for several other ligands, including the pathogenic prion protein, viruses, and bacteria. Acts as a PPP1R16B-dependent substrate of PPP1CA. The protein is Small ribosomal subunit protein uS2 of Bos taurus (Bovine).